We begin with the raw amino-acid sequence, 497 residues long: Kynureninase (497 aa).

Positions 59–86 are disordered; it reads GRLPAYPPNHAKPGETATAQNGTSNTND. The segment covering 75-86 has biased composition (polar residues); that stretch reads ATAQNGTSNTND. Pyridoxal 5'-phosphate contacts are provided by residues L166, T167, 194–197, D278, H281, and Y303; that span reads FPSD. The residue at position 304 (K304) is an N6-(pyridoxal phosphate)lysine. W337 and N365 together coordinate pyridoxal 5'-phosphate.

This sequence belongs to the kynureninase family. As to quaternary structure, homodimer. The cofactor is pyridoxal 5'-phosphate.

The protein localises to the cytoplasm. The enzyme catalyses L-kynurenine + H2O = anthranilate + L-alanine + H(+). The catalysed reaction is 3-hydroxy-L-kynurenine + H2O = 3-hydroxyanthranilate + L-alanine + H(+). The protein operates within amino-acid degradation; L-kynurenine degradation; L-alanine and anthranilate from L-kynurenine: step 1/1. It participates in cofactor biosynthesis; NAD(+) biosynthesis; quinolinate from L-kynurenine: step 2/3. Catalyzes the cleavage of L-kynurenine (L-Kyn) and L-3-hydroxykynurenine (L-3OHKyn) into anthranilic acid (AA) and 3-hydroxyanthranilic acid (3-OHAA), respectively. This is Kynureninase from Pyricularia oryzae (strain 70-15 / ATCC MYA-4617 / FGSC 8958) (Rice blast fungus).